Here is a 160-residue protein sequence, read N- to C-terminus: Cyclic pyranopterin monophosphate synthase (160 aa).

Substrate contacts are provided by residues 77 to 79 (MCH) and 114 to 115 (ME). Aspartate 129 is an active-site residue.

Belongs to the MoaC family. As to quaternary structure, homohexamer; trimer of dimers.

The catalysed reaction is (8S)-3',8-cyclo-7,8-dihydroguanosine 5'-triphosphate = cyclic pyranopterin phosphate + diphosphate. It functions in the pathway cofactor biosynthesis; molybdopterin biosynthesis. In terms of biological role, catalyzes the conversion of (8S)-3',8-cyclo-7,8-dihydroguanosine 5'-triphosphate to cyclic pyranopterin monophosphate (cPMP). In Listeria welshimeri serovar 6b (strain ATCC 35897 / DSM 20650 / CCUG 15529 / CIP 8149 / NCTC 11857 / SLCC 5334 / V8), this protein is Cyclic pyranopterin monophosphate synthase.